The primary structure comprises 382 residues: 3-dehydroquinate synthase (382 aa).

NAD(+) contacts are provided by residues 81–86 (EGEGSK), 115–119 (GVVGD), 139–140 (TS), Lys-152, and Lys-161. 3 residues coordinate Zn(2+): Glu-194, His-256, and His-274.

The protein belongs to the sugar phosphate cyclases superfamily. Dehydroquinate synthase family. Requires Co(2+) as cofactor. The cofactor is Zn(2+). NAD(+) serves as cofactor.

The protein localises to the cytoplasm. It catalyses the reaction 7-phospho-2-dehydro-3-deoxy-D-arabino-heptonate = 3-dehydroquinate + phosphate. Its pathway is metabolic intermediate biosynthesis; chorismate biosynthesis; chorismate from D-erythrose 4-phosphate and phosphoenolpyruvate: step 2/7. Functionally, catalyzes the conversion of 3-deoxy-D-arabino-heptulosonate 7-phosphate (DAHP) to dehydroquinate (DHQ). This chain is 3-dehydroquinate synthase, found in Bradyrhizobium sp. (strain BTAi1 / ATCC BAA-1182).